The chain runs to 308 residues: 1,4-dihydroxy-2-naphthoate octaprenyltransferase (308 aa).

Residues 1-20 (MTEQQISRTQAWLESLRPKT) lie on the Cytoplasmic side of the membrane. Residues 21–41 (LPLAFAAIIVGTALAWWQGHF) form a helical membrane-spanning segment. Asp-42 is a topological domain (periplasmic). Residues 43 to 63 (PLVALLALITAGLLQILSNLA) traverse the membrane as a helical segment. At 64-97 (NDYGDAVKGSDKPDRIGPLRGMQKGVITQQEMKR) the chain is on the cytoplasmic side. The chain crosses the membrane as a helical span at residues 98-118 (ALIITVVLICLSGLALVAVAC). The Periplasmic portion of the chain corresponds to 119 to 123 (HTLAD). The chain crosses the membrane as a helical span at residues 124 to 144 (FVGFLILGGLSIIAAITYTVG). The Cytoplasmic segment spans residues 145–148 (NRPY). Residues 149–169 (GYIGLGDISVLVFFGWLSVMG) form a helical membrane-spanning segment. Residues 170-176 (SWYLQAH) are Periplasmic-facing. A helical transmembrane segment spans residues 177–197 (TLIPALILPATACGLLATAVL). The Cytoplasmic portion of the chain corresponds to 198 to 227 (NINNLRDINSDRENGKNTLVVRLGEVNARR). The helical transmembrane segment at 228–247 (YHACLLMGSLVCLALFNLFS) threads the bilayer. The Periplasmic segment spans residues 248–250 (LHS). A helical membrane pass occupies residues 251-270 (LWGWLFLLAAPLLVKQARYV). The Cytoplasmic segment spans residues 271 to 286 (MREMDPVAMRPMLERT). Residues 287 to 307 (VKGALLTNLLFVLGIFLSQWA) form a helical membrane-spanning segment. Residue Ala-308 is a topological domain, periplasmic.

The protein belongs to the MenA family. Type 1 subfamily.

It localises to the cell inner membrane. The catalysed reaction is an all-trans-polyprenyl diphosphate + 1,4-dihydroxy-2-naphthoate + H(+) = a 2-demethylmenaquinol + CO2 + diphosphate. It functions in the pathway quinol/quinone metabolism; menaquinone biosynthesis; menaquinol from 1,4-dihydroxy-2-naphthoate: step 1/2. Its function is as follows. Conversion of 1,4-dihydroxy-2-naphthoate (DHNA) to demethylmenaquinone (DMK). Attaches octaprenylpyrophosphate, a membrane-bound 40-carbon side chain to DHNA. The conversion of DHNA to DMK proceeds in three stages: the removal of the carboxyl group of DHNA as CO(2), the attachment of the isoprenoid side chain, and a quinol-to-quinone oxidation, which is thought to be spontaneous. The protein is 1,4-dihydroxy-2-naphthoate octaprenyltransferase of Escherichia coli (strain K12).